The chain runs to 322 residues: Sideroflexin-1 (322 aa).

Residue Ser2 is modified to N-acetylserine. Topologically, residues 2 to 102 (SGELPPNINI…MSAQVPMNMT (101 aa)) are mitochondrial matrix. Residues 103 to 120 (ITGCMMTFYRTTPAVLFW) form a helical membrane-spanning segment. Residues 121 to 146 (QWINQSFNAVVNYTNRSGDAPLTVNE) are Mitochondrial intermembrane-facing. Residues 147 to 167 (LGTAYVSATTGAVATALGLNA) form a helical membrane-spanning segment. At 168–174 (LTKHVSP) the chain is on the mitochondrial matrix side. Residues 175–195 (LIGRFVPFAAVAAANCINIPL) form a helical membrane-spanning segment. At 196 to 228 (MRQRELRAGIPVTDENGNRLGESANAAKQAITQ) the chain is on the mitochondrial intermembrane side. The chain crosses the membrane as a helical span at residues 229–249 (VVISRILMAAPGMAIPPFIMN). Topologically, residues 250–266 (TLEKKAFLKRFPWMSAP) are mitochondrial matrix. Residues 267–287 (IQVGLVGFCLVFATPLCCALF) form a helical membrane-spanning segment. The Mitochondrial intermembrane segment spans residues 288 to 322 (PQKSSMSVTSLEAELQAKIRETSPELRRVYFNKGL).

This sequence belongs to the sideroflexin family.

Its subcellular location is the mitochondrion inner membrane. It carries out the reaction L-serine(in) = L-serine(out). The enzyme catalyses L-alanine(in) = L-alanine(out). The catalysed reaction is L-cysteine(in) = L-cysteine(out). Functionally, amino acid transporter importing serine, an essential substrate of the mitochondrial branch of the one-carbon pathway, into mitochondria. Mitochondrial serine is then converted to glycine and formate, which exits to the cytosol where it is used to generate the charged folates that serve as one-carbon donors. May also transport other amino acids including alanine and cysteine. In Sus scrofa (Pig), this protein is Sideroflexin-1 (SFXN1).